Reading from the N-terminus, the 63-residue chain is 2-hydroxymuconate tautomerase (63 aa).

The active-site Proton acceptor; via imino nitrogen is the proline 2.

This sequence belongs to the 4-oxalocrotonate tautomerase family. Homohexamer.

The catalysed reaction is (2Z,4E)-2-hydroxyhexa-2,4-dienedioate = (3E)-2-oxohex-3-enedioate. It functions in the pathway aromatic compound metabolism; salicylate degradation. Its function is as follows. Catalyzes the ketonization of 2-hydroxymuconate stereoselectively to yield 2-oxo-3-hexenedioate. This chain is 2-hydroxymuconate tautomerase (nahJ), found in Stutzerimonas stutzeri (Pseudomonas stutzeri).